The following is a 275-amino-acid chain: Ribosomal RNA small subunit methyltransferase A (275 aa).

Residues asparagine 21, leucine 23, glycine 48, glutamate 69, aspartate 94, and asparagine 115 each coordinate S-adenosyl-L-methionine.

The protein belongs to the class I-like SAM-binding methyltransferase superfamily. rRNA adenine N(6)-methyltransferase family. RsmA subfamily.

It is found in the cytoplasm. The enzyme catalyses adenosine(1518)/adenosine(1519) in 16S rRNA + 4 S-adenosyl-L-methionine = N(6)-dimethyladenosine(1518)/N(6)-dimethyladenosine(1519) in 16S rRNA + 4 S-adenosyl-L-homocysteine + 4 H(+). Specifically dimethylates two adjacent adenosines (A1518 and A1519) in the loop of a conserved hairpin near the 3'-end of 16S rRNA in the 30S particle. May play a critical role in biogenesis of 30S subunits. The sequence is that of Ribosomal RNA small subunit methyltransferase A from Clostridium botulinum (strain ATCC 19397 / Type A).